The primary structure comprises 1074 residues: DNA-directed RNA polymerase subunit beta (1074 aa).

This sequence belongs to the RNA polymerase beta chain family. In plastids the minimal PEP RNA polymerase catalytic core is composed of four subunits: alpha, beta, beta', and beta''. When a (nuclear-encoded) sigma factor is associated with the core the holoenzyme is formed, which can initiate transcription.

It localises to the plastid. Its subcellular location is the chloroplast. It carries out the reaction RNA(n) + a ribonucleoside 5'-triphosphate = RNA(n+1) + diphosphate. In terms of biological role, DNA-dependent RNA polymerase catalyzes the transcription of DNA into RNA using the four ribonucleoside triphosphates as substrates. In Chara vulgaris (Common stonewort), this protein is DNA-directed RNA polymerase subunit beta.